Consider the following 242-residue polypeptide: Probable transcriptional regulatory protein NGK_1508 (242 aa).

The protein belongs to the TACO1 family.

Its subcellular location is the cytoplasm. The protein is Probable transcriptional regulatory protein NGK_1508 of Neisseria gonorrhoeae (strain NCCP11945).